The sequence spans 494 residues: Nuclear distribution protein PAC1 (494 aa).

In terms of domain architecture, LisH spans 14–46 (QKNELDKSVLRYLNWNYKQTVRHEHAQDYESVR). Residues 90–123 (NSIVRLQKKIIELEQNTETLVSQIKDLNTQVSEL) are a coiled coil. 7 WD repeats span residues 153-192 (NVESSVTSVKLHPNLPIVFVATDHGKLYAFDLFNYTIPLA), 196-244 (SHTK…CKFQ), 251-292 (GHEH…SLKT), 295-334 (PHSQWVRSIDVLGDYIISGSHDTTLRLTHWPSGNGLSVGT), 347-395 (HFIE…LMAH), 415-454 (GHLSWVRDISIRGQYLFSCADDKSVRCWDLNTGQCLHVWE), and 457-492 (HTGFVNCLDLDVDFDSNVTPRQMMVTGGLDCKSNVF).

It belongs to the WD repeat LIS1/nudF family. Self-associates. Interacts with NDL1 and dynein.

The protein resides in the cytoplasm. The protein localises to the cytoskeleton. It is found in the spindle pole. Its function is as follows. Positively regulates the activity of the minus-end directed microtubule motor protein dynein. Plays a central role in positioning the mitotic spindle at the bud neck during cell division. Targets cytoplasmic dynein to microtubule plus ends, thereby promoting dynein-mediated microtubule sliding along the bud cortex and consequently the movement of the mitotic spindle to the bud neck. The sequence is that of Nuclear distribution protein PAC1 from Saccharomyces cerevisiae (strain Lalvin EC1118 / Prise de mousse) (Baker's yeast).